The sequence spans 749 residues: Protein lin-54 homolog (749 aa).

Lys139 participates in a covalent cross-link: Glycyl lysine isopeptide (Lys-Gly) (interchain with G-Cter in SUMO2). An N6-acetyllysine mark is found at Lys244 and Lys249. 4 positions are modified to phosphoserine: Ser264, Ser282, Ser310, and Ser314. A Glycyl lysine isopeptide (Lys-Gly) (interchain with G-Cter in SUMO2) cross-link involves residue Lys357. Residues 521 to 634 (PRKPCNCTKS…KCIGCKNFEE (114 aa)) form the CRC domain. The segment at 523–536 (KPCNCTKSLCLKLY) is DNA-binding. Positions 525, 527, 532, 537, 539, 546, 549, 551, and 554 each coordinate Zn(2+). The tract at residues 583-596 (IGKGKEGESDRRHS) is linker. Residues Cys599, Cys601, Cys606, Cys611, Cys613, Cys620, Cys624, Cys626, and Cys629 each coordinate Zn(2+). The segment at 599–612 (CNCKRSGCLKNYCE) is DNA-binding. Phosphoserine is present on Ser635. Residues Lys639, Lys659, and Lys661 each participate in a glycyl lysine isopeptide (Lys-Gly) (interchain with G-Cter in SUMO2) cross-link.

It belongs to the lin-54 family. As to quaternary structure, component of the DREAM complex (also named LINC complex) at least composed of E2F4, E2F5, LIN9, LIN37, LIN52, LIN54, MYBL1, MYBL2, RBL1, RBL2, RBBP4, RBL2, TFDP1 and TFDP2. The complex exists in quiescent cells where it represses cell cycle-dependent genes. It dissociates in S phase when LIN9, LIN37, LIN52 and LIN54 form a subcomplex that binds to MYBL2.

Its subcellular location is the nucleus. Its function is as follows. Component of the DREAM complex, a multiprotein complex that can both act as a transcription activator or repressor depending on the context. In G0 phase, the complex binds to more than 800 promoters and is required for repression of E2F target genes. In S phase, the complex selectively binds to the promoters of G2/M genes whose products are required for mitosis and participates in their cell cycle dependent activation. In the complex, acts as a DNA-binding protein that binds the promoter of CDK1 in a sequence-specific manner. Specifically recognizes the consensus motif 5'-TTYRAA-3' in target DNA. The chain is Protein lin-54 homolog (Lin54) from Mus musculus (Mouse).